The sequence spans 145 residues: SsrA-binding protein (145 aa).

This sequence belongs to the SmpB family.

It localises to the cytoplasm. Its function is as follows. Required for rescue of stalled ribosomes mediated by trans-translation. Binds to transfer-messenger RNA (tmRNA), required for stable association of tmRNA with ribosomes. tmRNA and SmpB together mimic tRNA shape, replacing the anticodon stem-loop with SmpB. tmRNA is encoded by the ssrA gene; the 2 termini fold to resemble tRNA(Ala) and it encodes a 'tag peptide', a short internal open reading frame. During trans-translation Ala-aminoacylated tmRNA acts like a tRNA, entering the A-site of stalled ribosomes, displacing the stalled mRNA. The ribosome then switches to translate the ORF on the tmRNA; the nascent peptide is terminated with the 'tag peptide' encoded by the tmRNA and targeted for degradation. The ribosome is freed to recommence translation, which seems to be the essential function of trans-translation. This chain is SsrA-binding protein, found in Mycoplasmopsis pulmonis (strain UAB CTIP) (Mycoplasma pulmonis).